Consider the following 287-residue polypeptide: Lys-63-specific deubiquitinase (287 aa).

The MPN domain occupies 33–176 (VHLESDAFLV…YTCFQSVQAQ (144 aa)). Residues histidine 119, histidine 121, and aspartate 132 each contribute to the Zn(2+) site. Residues 119-132 (HSHPHITVWPSHVD) carry the JAMM motif motif. A coiled-coil region spans residues 256–283 (LQWLEDRLEQNKQSIITLQKEKELLTQE).

The protein belongs to the peptidase M67A family. BRCC36 subfamily. As to quaternary structure, monomer. Homodimer. Component of the BRISC complex, at least composed of abraxas2, brcc3, babam1 and babam2. Interacts with abraxas2; the interaction is direct and may form a heterotetramer. Component of the BRCA1-A complex. Both the BRCA1-A complex and the BRISC complex bind polyubiquitin. It depends on Zn(2+) as a cofactor.

It is found in the nucleus. Its subcellular location is the cytoplasm. It localises to the cytoskeleton. The protein resides in the spindle pole. Its function is as follows. Metalloprotease that specifically cleaves 'Lys-63'-linked polyubiquitin chains, leaving the last ubiquitin chain attached to its substrates. Catalytic subunit of the BRISC complex, a multiprotein complex that specifically cleaves 'Lys-63'-linked ubiquitin in various substrates; brcc3 does not have activity by itself, but needs to be associated into a higher-order assembly, for minimal in vitro activity. This is Lys-63-specific deubiquitinase from Danio rerio (Zebrafish).